The sequence spans 87 residues: MSASEQGPKIKYGESAPKLDKAQLQFMKLIEEQNLDRVQKLKRIRRNNLLTAGALGVSVLAIYGYSIFSVQQEKFLDDFEEPKKVSS.

Residues 47-69 (NNLLTAGALGVSVLAIYGYSIFS) traverse the membrane as a helical segment.

It belongs to the COA3 family.

Its subcellular location is the mitochondrion membrane. Its function is as follows. Plays a critical role in the biogenesis and activity of cytochrome c oxidase (COX) (complex IV). This is Cytochrome c oxidase assembly factor 3, mitochondrial (Ccdc56) from Drosophila melanogaster (Fruit fly).